Here is a 226-residue protein sequence, read N- to C-terminus: UPF0173 metal-dependent hydrolase GFO_2312 (226 aa).

It belongs to the UPF0173 family.

The protein is UPF0173 metal-dependent hydrolase GFO_2312 of Christiangramia forsetii (strain DSM 17595 / CGMCC 1.15422 / KT0803) (Gramella forsetii).